Here is a 31-residue protein sequence, read N- to C-terminus: Cytochrome b6-f complex subunit 6 (31 aa).

Residues 4–26 (LTSYFGFLLAALTITSALFIGLN) traverse the membrane as a helical segment.

The protein belongs to the PetL family. In terms of assembly, the 4 large subunits of the cytochrome b6-f complex are cytochrome b6, subunit IV (17 kDa polypeptide, PetD), cytochrome f and the Rieske protein, while the 4 small subunits are PetG, PetL, PetM and PetN. The complex functions as a dimer.

It localises to the plastid. It is found in the chloroplast thylakoid membrane. Component of the cytochrome b6-f complex, which mediates electron transfer between photosystem II (PSII) and photosystem I (PSI), cyclic electron flow around PSI, and state transitions. PetL is important for photoautotrophic growth as well as for electron transfer efficiency and stability of the cytochrome b6-f complex. This chain is Cytochrome b6-f complex subunit 6, found in Amaranthus caudatus (Love-lies-bleeding).